A 63-amino-acid polypeptide reads, in one-letter code: Lysis protein (63 aa).

Residues 21-43 (LYVWIALAIVLSDFTSIFSHWIW) form a helical membrane-spanning segment.

It belongs to the Leviviricetes lysis protein family.

Its subcellular location is the host cell inner membrane. The protein resides in the host cell outer membrane. Its function is as follows. Induces the formation of specific membrane adhesion sites between the inner and outer membranes, apparently leading to host cell lysis. Lysis may be performed via activation of host murein hydrolases. This Escherichia coli (Bacteriophage GA) protein is Lysis protein.